The primary structure comprises 337 residues: Ferredoxin--NADP reductase (337 aa).

7 residues coordinate FAD: Asp-35, Gln-43, Tyr-48, Val-88, Phe-123, Asp-289, and Thr-330.

The protein belongs to the ferredoxin--NADP reductase type 2 family. As to quaternary structure, homodimer. The cofactor is FAD.

The catalysed reaction is 2 reduced [2Fe-2S]-[ferredoxin] + NADP(+) + H(+) = 2 oxidized [2Fe-2S]-[ferredoxin] + NADPH. This chain is Ferredoxin--NADP reductase, found in Paramagnetospirillum magneticum (strain ATCC 700264 / AMB-1) (Magnetospirillum magneticum).